We begin with the raw amino-acid sequence, 848 residues long: MAEVTVKQLAADVGAPVDRLLKQIVEAGLKARSENDAVTSDEKQQLLAYLRKNHGEAEAEPRKITLKRKTTTTLKAGKAKTVNVEVRKRRTYIKRAELQPEPEAEAPAPEEPVQAPAAEQAPVEEAPKVAAEAAPAEAPETEAPAAAETEAKAAPEPAAESAEPAIAPEDIPMPPPEDEGRDRKPKKKKEKVRERGDDIEEGKPKKKQAGHRGPRSRPVEEPVVLSEDEEETTLRKPLRAKKKPKEKRHAFERPTKPMVREVQIPETITVGDLAQRMAVKSADVIKTLMGMGVMATINQALDQETAILVTEELGHKPKAVSEDAFEEEVLSEITGPDEGKEKIKRAPVVSVMGHVDHGKTSLLDHIRRAKVAAGESGGITQHIGAYHVETEHGMVSFLDTPGHAAFTAMRARGAQCTDIVILVVAADDGVMPQTKEAVEHARSAGVPIVVAINKMDKEEADPDRIKNELSALEVIPEDWGGDVQFVPVSAHTGMGIDDLLEAVLLQAEILELEASPDAAAKGVVVESSLERGRGSVATVLVQNGTLRQGDMVVAGSFFGKVRAMTDEAGRQVKEAGPSIPVEILGLNGTPDAGDEFFAVADEKKAKELAEFRQTREREQRLQRQQAAKLENMFENMGKDEVKTLNVVLKTDVRGSLEAITKALQDLGNDEVQVKIVSSGVGGIAETDVSLAMATNAVIFGFNVRADTASKRLVEQEGLDLRYYSIIYNLIDDVKAALTGMLKPEFREDIVGIADVRDVFRSPKFGQVAGCMVTEGTVYRNKPIRVLRDNVVIFEGELESLRRFKDDVAEVRNGMECGIGVKGYDVKVGDQIEVFDRVRVERQLESTGA.

The interval 90-253 is disordered; sequence RTYIKRAELQ…PKEKRHAFER (164 aa). Residues 105 to 170 show a composition bias toward low complexity; that stretch reads EAPAPEEPVQ…SAEPAIAPED (66 aa). Composition is skewed to basic residues over residues 204 to 215 and 236 to 248; these read PKKKQAGHRGPR and KPLRAKKKPKEKR. The 168-residue stretch at 344–511 folds into the tr-type G domain; that stretch reads KRAPVVSVMG…AVLLQAEILE (168 aa). Positions 353–360 are G1; that stretch reads GHVDHGKT. 353-360 contributes to the GTP binding site; it reads GHVDHGKT. The G2 stretch occupies residues 378–382; that stretch reads GITQH. Residues 399 to 402 form a G3 region; the sequence is DTPG. GTP-binding positions include 399 to 403 and 453 to 456; these read DTPGH and NKMD. The segment at 453-456 is G4; the sequence is NKMD. The G5 stretch occupies residues 489–491; sequence SAH.

It belongs to the TRAFAC class translation factor GTPase superfamily. Classic translation factor GTPase family. IF-2 subfamily.

The protein localises to the cytoplasm. In terms of biological role, one of the essential components for the initiation of protein synthesis. Protects formylmethionyl-tRNA from spontaneous hydrolysis and promotes its binding to the 30S ribosomal subunits. Also involved in the hydrolysis of GTP during the formation of the 70S ribosomal complex. The sequence is that of Translation initiation factor IF-2 from Marinobacter nauticus (strain ATCC 700491 / DSM 11845 / VT8) (Marinobacter aquaeolei).